A 292-amino-acid polypeptide reads, in one-letter code: Phosphatidylglycerol--prolipoprotein diacylglyceryl transferase (292 aa).

Helical transmembrane passes span 18–38, 67–87, and 105–125; these read LFGVTFALRWYALAYIAGLLI, LLTWVILGVILGGRLGFVLFY, and GGMSFHGGFLGVMTALVAFCL. A 1,2-diacyl-sn-glycero-3-phospho-(1'-sn-glycerol) is bound at residue Arg-150. 3 helical membrane passes run 193–213, 222–242, and 266–286; these read QIYEAGLEGILLFTVLSLLVW, GSVSGMFLAGYGATRFLVEFV, and GLTMGQILSLPMILLGLYLIL.

It belongs to the Lgt family.

Its subcellular location is the cell inner membrane. The enzyme catalyses L-cysteinyl-[prolipoprotein] + a 1,2-diacyl-sn-glycero-3-phospho-(1'-sn-glycerol) = an S-1,2-diacyl-sn-glyceryl-L-cysteinyl-[prolipoprotein] + sn-glycerol 1-phosphate + H(+). It participates in protein modification; lipoprotein biosynthesis (diacylglyceryl transfer). Functionally, catalyzes the transfer of the diacylglyceryl group from phosphatidylglycerol to the sulfhydryl group of the N-terminal cysteine of a prolipoprotein, the first step in the formation of mature lipoproteins. This Cereibacter sphaeroides (strain ATCC 17023 / DSM 158 / JCM 6121 / CCUG 31486 / LMG 2827 / NBRC 12203 / NCIMB 8253 / ATH 2.4.1.) (Rhodobacter sphaeroides) protein is Phosphatidylglycerol--prolipoprotein diacylglyceryl transferase.